The sequence spans 92 residues: Small ribosomal subunit protein uS19 (92 aa).

Belongs to the universal ribosomal protein uS19 family.

In terms of biological role, protein S19 forms a complex with S13 that binds strongly to the 16S ribosomal RNA. The polypeptide is Small ribosomal subunit protein uS19 (Leuconostoc mesenteroides subsp. mesenteroides (strain ATCC 8293 / DSM 20343 / BCRC 11652 / CCM 1803 / JCM 6124 / NCDO 523 / NBRC 100496 / NCIMB 8023 / NCTC 12954 / NRRL B-1118 / 37Y)).